The sequence spans 220 residues: Uracil-DNA glycosylase (220 aa).

Asp-65 functions as the Proton acceptor in the catalytic mechanism.

This sequence belongs to the uracil-DNA glycosylase (UDG) superfamily. UNG family.

The protein localises to the cytoplasm. It catalyses the reaction Hydrolyzes single-stranded DNA or mismatched double-stranded DNA and polynucleotides, releasing free uracil.. Functionally, excises uracil residues from the DNA which can arise as a result of misincorporation of dUMP residues by DNA polymerase or due to deamination of cytosine. The chain is Uracil-DNA glycosylase from Amoebophilus asiaticus (strain 5a2).